The primary structure comprises 571 residues: Transcription factor ABORTED MICROSPORES (571 aa).

Positions N275–R284 are enriched in basic and acidic residues. Disordered regions lie at residues N275–R321, E365–N390, and D536–Q571. Positions G310–L359 constitute a bHLH domain. Residues D368–D378 show a composition bias toward acidic residues. The segment covering N381–N390 has biased composition (polar residues). Residues A556–Q571 are compositionally biased toward basic residues.

Homodimer. Interacts with ASHR3. In terms of tissue distribution, mostly expressed in closed, post-meiotic buds, and, to a lower extent, in pre-meiotic buds. Detected in leaves, stems, and flowers.

The protein localises to the nucleus. Transcription factor. Plays a crucial role in tapetum development. Required for male fertility and pollen differentiation, especially during the post-meiotic transcriptional regulation of microspore development within the developing anther. Binds E-box regions in the AHL16/TEK promoter. In Arabidopsis thaliana (Mouse-ear cress), this protein is Transcription factor ABORTED MICROSPORES (AMS).